The chain runs to 199 residues: TATA-box-binding protein (199 aa).

Repeat copies occupy residues I10–L86 and I101–L177.

This sequence belongs to the TBP family.

General factor that plays a role in the activation of archaeal genes transcribed by RNA polymerase. Binds specifically to the TATA box promoter element which lies close to the position of transcription initiation. In Pyrobaculum calidifontis (strain DSM 21063 / JCM 11548 / VA1), this protein is TATA-box-binding protein.